The chain runs to 860 residues: Leucine--tRNA ligase (860 aa).

The short motif at 42–52 is the 'HIGH' region element; sequence PYPSGRLHMGH. A 'KMSKS' region motif is present at residues 619–623; it reads KMSKS. Lys622 lines the ATP pocket.

The protein belongs to the class-I aminoacyl-tRNA synthetase family.

It is found in the cytoplasm. It carries out the reaction tRNA(Leu) + L-leucine + ATP = L-leucyl-tRNA(Leu) + AMP + diphosphate. This Escherichia coli O81 (strain ED1a) protein is Leucine--tRNA ligase.